Consider the following 525-residue polypeptide: Histidine-rich glycoprotein (525 aa).

Residues 1 to 18 (MKALIAALLLITLQYSCA) form the signal peptide. Cystatin domains lie at 19 to 136 (VSPT…SALA) and 137 to 254 (NTKD…NING). 5 cysteine pairs are disulfide-bonded: Cys-24–Cys-504, Cys-78–Cys-89, Cys-105–Cys-126, Cys-203–Cys-417, and Cys-218–Cys-241. Residues 41 to 84 (RRRDGYLFQLLRIADAHLDRVENTTVYYLVLDVQESDCSVLSRK) are interaction with ATP5F1A. Asn-63 is a glycosylation site (N-linked (GlcNAc...) asparagine). Asn-125 carries N-linked (GlcNAc...) asparagine glycosylation. Residues 252–407 (INGVPPHLGH…GHHPHGHHPH (156 aa)) are disordered. A compositionally biased stretch (basic residues) spans 284–293 (RDHHHPHKPH). A compositionally biased stretch (pro residues) spans 310–320 (PPLPQGPPPLL). Residues 323 to 348 (SCSSCQHATFGTNGAQRHSHNNNSSD) show a composition bias toward polar residues. N-linked (GlcNAc...) asparagine glycosylation is found at Asn-344 and Asn-345. Residues 348 to 382 (DLHPHKHHSHEQHPHGHHPHAHHPHEHDTHRQHPH) are necessary for endothelial cell focal adhesions and anti-angiogenic activities. 2 stretches are compositionally biased toward basic residues: residues 351–371 (PHKH…AHHP) and 379–407 (QHPH…HHPH).

In terms of assembly, interacts (via the HRR domain) with TPM1; the interaction appears to contribute to the antiangiogenic properties of the HRR domain. Interacts with THBS2; the interaction blocks the antiangiogenic effect of THBS2 with CD36. Interacts with THBS1 (via the TSP type I repeats); the interaction blocks the antiangiogenic effect of THBS1 with CD3. Interacts with PLG (via its Kringle domains); the interaction tethers PLG to the cell surface and enhances its activation. Interacts with HPSE; the interaction is enhanced at acidic pH, partially inhibits binding of HPSE to cell surface receptors and modulates its enzymatic activity. Interacts (via the HRR domain) with TMP1; the interaction partially mediates the antiangiogenic properties of HRG. Interacts with kappa and lambda light chains of IgG molecules. Interacts with ATP5F1A; the interaction occurs on the surface of T-cells and alters their cell morphology in concert with CONA. Binds IgG molecules containing kappa and lambda light chains and inhibits the formation of insoluble immunoglobulin complexes. Interacts with F12; the interaction, which is enhanced in the presence of zinc ions and inhibited by heparin-binding to HRG, inhibits factor XII autoactivation and contact-initiated coagulation. Zn(2+) serves as cofactor. In terms of processing, proteolytic cleavage produces several HRG fragments which are mostly disulfide-linked and, therefore, not released. Cleavage by plasmin is inhibited in the presence of heparin, zinc ions or in an acidic environment. Cleavage reduces binding of HRG to heparan sulfate, but enhances the ability of HRG to bind and tether plasminogen to the cell surface. On platelet activation, releases a 33 kDa antiangiogenic peptide which encompasses the HRR. Also cleaved in the C-terminal by plasmin. Post-translationally, N-glycosylated. As to expression, expressed in macrophages and in malignant cells. Expressed by the liver and secreted in plasma (at protein level).

The protein localises to the secreted. Its function is as follows. Plasma glycoprotein that binds a number of ligands such as heme, heparin, heparan sulfate, thrombospondin, plasminogen, and divalent metal ions. Binds heparin and heparin/glycosaminoglycans in a zinc-dependent manner. Binds heparan sulfate on the surface of liver, lung, kidney and heart endothelial cells. Binds to N-sulfated polysaccharide chains on the surface of liver endothelial cells. Inhibits rosette formation. Acts as an adapter protein and is implicated in regulating many processes such as immune complex and pathogen clearance, cell chemotaxis, cell adhesion, angiogenesis, coagulation and fibrinolysis. Mediates clearance of necrotic cells through enhancing the phagocytosis of necrotic cells in a heparan sulfate-dependent pathway. This process can be regulated by the presence of certain HRG ligands such as heparin and zinc ions. Binds to IgG subclasses of immunoglobins containing kappa and lambda light chains with different affinities regulating their clearance and inhibiting the formation of insoluble immune complexes. Tethers plasminogen to the cell surface. Binds T-cells and alters the cell morphology. Modulates angiogenesis by blocking the CD6-mediated antiangiongenic effect of thrombospondins, THBS1 and THBS2. Acts as a regulator of the vascular endothelial growth factor (VEGF) signaling pathway; inhibits endothelial cell motility by reducing VEGF-induced complex formation between PXN/paxillin and ILK/integrin-linked protein kinase and by promoting inhibition of VEGF-induced tyrosine phosphorylation of focal adhesion kinases and alpha-actinins in endothelial cells. Also plays a role in the regulation of tumor angiogenesis and tumor immune surveillance. Normalizes tumor vessels and promotes antitumor immunity by polarizing tumor-associated macrophages, leading to decreased tumor growth and metastasis. This is Histidine-rich glycoprotein (HRG) from Homo sapiens (Human).